The following is a 479-amino-acid chain: Ubiquinone biosynthesis monooxygenase COQ6, mitochondrial (479 aa).

This sequence belongs to the UbiH/COQ6 family. Component of a multi-subunit COQ enzyme complex, composed of at least COQ3, COQ4, COQ5, COQ6, COQ7 and COQ9. FAD serves as cofactor.

The protein localises to the mitochondrion inner membrane. The enzyme catalyses 4-hydroxy-3-(all-trans-decaprenyl)benzoate + 2 reduced [2Fe-2S]-[ferredoxin] + O2 + 2 H(+) = 3,4-dihydroxy-5-(all-trans-decaprenyl)benzoate + 2 oxidized [2Fe-2S]-[ferredoxin] + H2O. It catalyses the reaction 2-methoxy-6-(all-trans-decaprenyl)phenol + 2 reduced [2Fe-2S]-[ferredoxin] + O2 + 2 H(+) = 2-methoxy-6-(all-trans-decaprenyl)benzene-1,4-diol + 2 oxidized [2Fe-2S]-[ferredoxin] + H2O. Its pathway is cofactor biosynthesis; ubiquinone biosynthesis. Functionally, FAD-dependent monooxygenase required for two non-consecutive steps during ubiquinone biosynthesis. Required for the C5-ring hydroxylation during ubiquinone biosynthesis by catalyzing the hydroxylation of 4-hydroxy-3-(all-trans-decaprenyl)benzoic acid to 3,4-dihydroxy-5-(all-trans-decaprenyl)benzoic acid. Also acts downstream of COQ4, for the C1-hydroxylation during ubiquinone biosynthesis by catalyzing the hydroxylation of 2-methoxy-6-(all-trans-decaprenyl)phenol to 2-methoxy-6-(all-trans-decaprenyl)benzene-1,4-diol. The electrons required for the hydroxylation reaction are funneled indirectly to coq6 from NADPH via a ferredoxin/ferredoxin reductase system. The polypeptide is Ubiquinone biosynthesis monooxygenase COQ6, mitochondrial (Schizosaccharomyces pombe (strain 972 / ATCC 24843) (Fission yeast)).